The primary structure comprises 132 residues: Small ribosomal subunit protein uS11c (132 aa).

The protein belongs to the universal ribosomal protein uS11 family. As to quaternary structure, part of the 30S ribosomal subunit.

The protein localises to the plastid. Its subcellular location is the chloroplast. In Cryptomeria japonica (Japanese cedar), this protein is Small ribosomal subunit protein uS11c.